Here is a 185-residue protein sequence, read N- to C-terminus: Pyruvate/ketoisovalerate oxidoreductases common subunit gamma (185 aa).

As to quaternary structure, heterotetramer of one alpha, one beta, one delta and one gamma chain.

The enzyme catalyses 2 oxidized [2Fe-2S]-[ferredoxin] + pyruvate + CoA = 2 reduced [2Fe-2S]-[ferredoxin] + acetyl-CoA + CO2 + H(+). The catalysed reaction is 3-methyl-2-oxobutanoate + 2 oxidized [2Fe-2S]-[ferredoxin] + CoA = 2-methylpropanoyl-CoA + 2 reduced [2Fe-2S]-[ferredoxin] + CO2 + H(+). This Thermococcus litoralis (strain ATCC 51850 / DSM 5473 / JCM 8560 / NS-C) protein is Pyruvate/ketoisovalerate oxidoreductases common subunit gamma (porG).